The chain runs to 1220 residues: Deubiquitinating protein VCPIP1 (1220 aa).

Residues Met-1–Ala-19 are compositionally biased toward pro residues. Positions Met-1–Asp-40 are disordered. Residues Pro-20–Leu-35 show a composition bias toward low complexity. Positions Leu-207–Ile-360 constitute an OTU domain. Residue Asp-215 is part of the active site. Cys-218 acts as the Nucleophile in catalysis. Residue His-353 is part of the active site. At Lys-407 the chain carries N6-acetyllysine. Disordered regions lie at residues Ser-724–Ile-778 and Glu-988–Gly-1008. A phosphoserine mark is found at Ser-746 and Ser-756. Over residues Pro-754–Thr-770 the composition is skewed to low complexity. Thr-762 carries the post-translational modification Phosphothreonine. Residues Ser-767, Ser-993, Ser-997, and Ser-1076 each carry the phosphoserine modification. 2 disordered regions span residues Ser-1113–Val-1140 and Phe-1185–Ser-1220. Phosphoserine occurs at positions 1196 and 1205. The span at Met-1197–Asp-1207 shows a compositional bias: acidic residues. Positions Ala-1208 to Ser-1220 are enriched in polar residues.

In terms of assembly, binds VCP and the ternary complex containing STX5A, NSFL1C and VCP. Post-translationally, phosphorylated at Ser-1205 by ATM or ATR following induction of covalent DNA-protein cross-links (DPCs).

Its subcellular location is the nucleus. It localises to the cytoplasm. The protein resides in the endoplasmic reticulum. It is found in the golgi apparatus. The protein localises to the golgi stack. The catalysed reaction is Thiol-dependent hydrolysis of ester, thioester, amide, peptide and isopeptide bonds formed by the C-terminal Gly of ubiquitin (a 76-residue protein attached to proteins as an intracellular targeting signal).. In terms of biological role, deubiquitinating enzyme involved in DNA repair and reassembly of the Golgi apparatus and the endoplasmic reticulum following mitosis. Necessary for VCP-mediated reassembly of Golgi stacks after mitosis. Plays a role in VCP-mediated formation of transitional endoplasmic reticulum (tER). Mediates dissociation of the ternary complex containing STX5A, NSFL1C and VCP. Also involved in DNA repair following phosphorylation by ATM or ATR: acts by catalyzing deubiquitination of SPRTN, thereby promoting SPRTN recruitment to chromatin and subsequent proteolytic cleavage of covalent DNA-protein cross-links (DPCs). Hydrolyzes 'Lys-11'- and 'Lys-48'-linked polyubiquitin chains. The protein is Deubiquitinating protein VCPIP1 of Mus musculus (Mouse).